The chain runs to 141 residues: Hemoglobin subunit alpha (141 aa).

Residues 1–141 enclose the Globin domain; sequence VLSPADKTNV…VSTVLTSKYR (141 aa). Ser3 carries the phosphoserine modification. Lys7 is modified (N6-succinyllysine). Thr8 bears the Phosphothreonine mark. At Lys11 the chain carries N6-succinyllysine. The residue at position 16 (Lys16) is an N6-acetyllysine; alternate. N6-succinyllysine; alternate is present on Lys16. Residue Tyr24 is modified to Phosphotyrosine. The residue at position 35 (Ser35) is a Phosphoserine. Lys40 is subject to N6-succinyllysine. Phosphoserine is present on Ser49. Position 58 (His58) interacts with O2. His87 is a binding site for heme b. Ser102 carries the phosphoserine modification. Phosphothreonine is present on Thr108. At Ser124 the chain carries Phosphoserine. A phosphothreonine mark is found at Thr134 and Thr137. The residue at position 138 (Ser138) is a Phosphoserine.

Belongs to the globin family. As to quaternary structure, heterotetramer of two alpha chains and two beta chains. Red blood cells.

Functionally, involved in oxygen transport from the lung to the various peripheral tissues. Hemopressin acts as an antagonist peptide of the cannabinoid receptor CNR1. Hemopressin-binding efficiently blocks cannabinoid receptor CNR1 and subsequent signaling. The polypeptide is Hemoglobin subunit alpha (HBA) (Lutra lutra (European river otter)).